Here is a 1370-residue protein sequence, read N- to C-terminus: Zinc finger MYM-type protein 3 (1370 aa).

Low complexity-rich tracts occupy residues 1–12 and 52–61; these read MDPSDFPSPFDP and PSSGALDLLD. Disordered stretches follow at residues 1-72 and 90-301; these read MDPS…DPGV and PSPP…QRAG. The segment covering 230-253 has biased composition (basic and acidic residues); that stretch reads ASEKPPERKRSERVRRAEPPKPEV. Ser-263 and Ser-267 each carry phosphoserine. Residues 263 to 279 are compositionally biased toward acidic residues; sequence SDEDSDAMVDDPNDEDF. Residues Lys-308, Lys-320, and Lys-328 each participate in a glycyl lysine isopeptide (Lys-Gly) (interchain with G-Cter in SUMO2) cross-link. 9 consecutive MYM-type zinc fingers follow at residues 332-366, 378-422, 429-464, 477-511, 521-559, 567-604, 612-646, 653-692, and 699-733; these read QLFC…TKDS, HEFC…LHEV, HRLC…KTGS, KRFC…FEML, SLFC…PCYY, YQFC…KPEV, FQFC…HEKL, KSFC…GVTE, and WDFC…LETI. Position 464 is a phosphoserine (Ser-464). A compositionally biased stretch (polar residues) spans 759-794; it reads NLDTQSGPESLLNSQSPESKPQTPSQTKVENSNTVR. The interval 759-830 is disordered; that stretch reads NLDTQSGPES…PPPPATPRKN (72 aa). Glycyl lysine isopeptide (Lys-Gly) (interchain with G-Cter in SUMO2) cross-links involve residues Lys-778 and Lys-786. At Thr-795 the chain carries Phosphothreonine. A Glycyl lysine isopeptide (Lys-Gly) (interchain with G-Cter in SUMO2) cross-link involves residue Lys-804. Pro residues predominate over residues 815–826; it reads APTPPPPPPPAT. Phosphothreonine is present on residues Thr-817 and Thr-826. Residues Lys-847, Lys-861, Lys-920, and Lys-1275 each participate in a glycyl lysine isopeptide (Lys-Gly) (interchain with G-Cter in SUMO2) cross-link.

May be a component of a BHC histone deacetylase complex that contains HDAC1, HDAC2, HMG20B/BRAF35, KDM1A, RCOR1/CoREST, PHF21A/BHC80, ZMYM2, ZNF217, ZMYM3, GSE1 and GTF2I. Most abundant in brain, moderate in muscle and heart, low in other tissues except placenta.

It is found in the nucleus. In terms of biological role, plays a role in the regulation of cell morphology and cytoskeletal organization. The protein is Zinc finger MYM-type protein 3 (ZMYM3) of Homo sapiens (Human).